The following is a 223-amino-acid chain: Octanoyltransferase (223 aa).

Residues 30–214 (DLDRDCFLLT…IVADLFGEFT (185 aa)) enclose the BPL/LPL catalytic domain. Residues 75–82 (RGGEITYH), 144–146 (SIG), and 157–159 (GFA) contribute to the substrate site. Residue C175 is the Acyl-thioester intermediate of the active site.

It belongs to the LipB family.

It localises to the cytoplasm. It carries out the reaction octanoyl-[ACP] + L-lysyl-[protein] = N(6)-octanoyl-L-lysyl-[protein] + holo-[ACP] + H(+). The protein operates within protein modification; protein lipoylation via endogenous pathway; protein N(6)-(lipoyl)lysine from octanoyl-[acyl-carrier-protein]: step 1/2. Functionally, catalyzes the transfer of endogenously produced octanoic acid from octanoyl-acyl-carrier-protein onto the lipoyl domains of lipoate-dependent enzymes. Lipoyl-ACP can also act as a substrate although octanoyl-ACP is likely to be the physiological substrate. The protein is Octanoyltransferase of Desulfotalea psychrophila (strain LSv54 / DSM 12343).